Here is a 557-residue protein sequence, read N- to C-terminus: uncharacterized protein (557 aa).

The region spanning 7 to 206 is the DhaL domain; it reads SSFIDMLRLG…FACFLEGMLS (200 aa).

This is an uncharacterized protein from Mycoplasma genitalium (strain ATCC 33530 / DSM 19775 / NCTC 10195 / G37) (Mycoplasmoides genitalium).